The sequence spans 1333 residues: Partitioning defective 3 homolog (1333 aa).

A Phosphoserine modification is found at serine 25. The residue at position 91 (threonine 91) is a Phosphothreonine. The interval 143–262 (SSDPALTGLS…VGHADTGLEN (120 aa)) is disordered. Composition is skewed to polar residues over residues 150 to 163 (GLST…FSSE) and 171 to 187 (TRWS…TAGS). Phosphoserine is present on residues serine 156 and serine 174. The segment covering 190-203 (TCDRKKDENYRSLP) has biased composition (basic and acidic residues). Positions 207 to 224 (SSWSNQFQRDNARSSLSA) are enriched in polar residues. The PDZ 1 domain occupies 271–359 (MVKLVQVPND…ARVIWFHVVP (89 aa)). Disordered regions lie at residues 369–388 (LSQR…DSHC) and 397–441 (NAPQ…APPS). At serine 383 the chain carries Phosphoserine. PDZ domains are found at residues 461–546 (NIQL…LVFR) and 590–677 (EVPL…GMIQ). At tyrosine 489 the chain carries Phosphotyrosine. Serine 692, serine 695, serine 715, serine 728, serine 806, and serine 824 each carry phosphoserine. Interaction with PRKCI and PRKCZ stretches follow at residues 712–932 (RRIS…YDKP) and 712–936 (RRIS…MVDD). Lysine 831 carries the N6-acetyllysine modification. Serine 834 carries the post-translational modification Phosphoserine. Residue lysine 848 is modified to N6-acetyllysine. Residues serine 849 and serine 869 each carry the phosphoserine modification. Disordered regions lie at residues 861–884 (TVDD…KKSS), 928–1011 (SYDK…AKKG), 1024–1071 (KHRK…ERQA), 1110–1267 (PQSP…LGGH), and 1283–1333 (QEQR…PFYS). N6-acetyllysine is present on lysine 881. The tract at residues 931–1333 (KPMVDDDDEG…TPEKGRPFYS (403 aa)) is interaction with FRMD4A. Residues 935–949 (DDDDEGMETLEEDTE) are compositionally biased toward acidic residues. At serine 958 the chain carries Phosphoserine; by AURKA. Serine 967 and serine 969 each carry phosphoserine. 2 stretches are compositionally biased toward basic and acidic residues: residues 977–1005 (DPEK…EKDK) and 1026–1039 (RKDD…RIKI). The residue at position 1042 (serine 1042) is a Phosphoserine. Basic and acidic residues predominate over residues 1046–1071 (EEDRVRMKEEQERIQAKTREFRERQA). Residues 1046–1078 (EEDRVRMKEEQERIQAKTREFRERQARERDYAE) are a coiled coil. The segment covering 1134 to 1143 (PGDSNRSTPS) has biased composition (polar residues). A compositionally biased stretch (basic and acidic residues) spans 1144–1171 (NHDRIQRLRQEFQQAKQDEDVEDRRRTY). 3 coiled-coil regions span residues 1145–1168 (HDRI…EDRR), 1195–1218 (VQVQ…YSSL), and 1274–1295 (MLET…LKKQ). Positions 1176–1199 (SWSSSRPASQSGRHSVSVEVQVQR) are enriched in low complexity. Over residues 1215–1236 (YSSLPRQSRKNASSISQDSWEQ) the composition is skewed to polar residues. Positions 1283-1292 (QEQRRKEQQL) are enriched in basic and acidic residues. Positions 1314–1323 (SQVARLNRLQ) are enriched in polar residues. The span at 1324-1333 (TPEKGRPFYS) shows a compositional bias: basic and acidic residues. Residue lysine 1327 is modified to N6-acetyllysine.

Belongs to the PAR3 family. Interacts with PRCKI and CDH5. Interacts (via PDZ 3 domain) with PTEN (via C-terminus). Component of a complex whose core is composed of ARHGAP17, AMOT, PALS1, PATJ and PARD3/PAR3. Interacts with LIMK2, AURKA and AURKB. Component of the Par polarity complex, composed of at least phosphorylated PRKCZ, PARD3 and TIAM1. Interacts with ECT2 and FBF1. Interacts (via PDZ 1 domain) with F11R/JAM1, PARD6A and PARD6B. Part of a complex with PARD6A or PARD6B, PRKCI or PRKCZ and CDC42 or RAC1. Directly interacts with TIAM1 and TIAM2. Interacts with SIRT2. Interacts (via coiled-coil domain) with FRMD4A. Found in a complex with PARD3, CYTH1 and FRMD4A. Interacts with SAPCD2. Interacts with PRKCA. In terms of assembly, interacts with PRKCZ. Acetylated. Deacetylated by SIRT2, thereby inhibiting Schwann cell peripheral myelination. In terms of processing, phosphorylation at Ser-824 by PRKCZ and PRKCI occurs at the most apical tip of epithelial cell-cell contacts during the initial phase of tight junction formation and may promote dissociation of the complex with PARD6. EGF-induced Tyr-1123 phosphorylation mediates dissociation from LIMK2. Phosphorylation by AURKA at Ser-958 is required for the normal establishment of neuronal polarity. Isoform 4 and isoform 5 are phosphorylated during oocyte maturation. In terms of tissue distribution, all isoforms are expressed in heart, while expression in brain is mainly limited to isoform 1, and to isoform 3 to a weaker level.

It is found in the cytoplasm. The protein resides in the endomembrane system. Its subcellular location is the cell junction. The protein localises to the tight junction. It localises to the adherens junction. It is found in the cell cortex. The protein resides in the cytoskeleton. Its subcellular location is the cell membrane. Its function is as follows. Adapter protein involved in asymmetrical cell division and cell polarization processes. Seems to play a central role in the formation of epithelial tight junctions. Targets the phosphatase PTEN to cell junctions. Association with PARD6B may prevent the interaction of PARD3 with F11R/JAM1, thereby preventing tight junction assembly. The PARD6-PARD3 complex links GTP-bound Rho small GTPases to atypical protein kinase C proteins. Required for establishment of neuronal polarity and normal axon formation in cultured hippocampal neurons. Involved in Schwann cell peripheral myelination. The chain is Partitioning defective 3 homolog (Pard3) from Mus musculus (Mouse).